The primary structure comprises 212 residues: Pyrrolidone-carboxylate peptidase (212 aa).

Catalysis depends on residues E80, C143, and H165.

It belongs to the peptidase C15 family. As to quaternary structure, homotetramer.

It is found in the cytoplasm. It carries out the reaction Release of an N-terminal pyroglutamyl group from a polypeptide, the second amino acid generally not being Pro.. Functionally, removes 5-oxoproline from various penultimate amino acid residues except L-proline. This chain is Pyrrolidone-carboxylate peptidase, found in Vibrio parahaemolyticus serotype O3:K6 (strain RIMD 2210633).